The chain runs to 934 residues: uncharacterized protein (934 aa).

An N-terminal signal peptide occupies residues 1-24; the sequence is MKLKKRYLLLGSTLTVSAALILSA. Residue Cys25 is the site of N-palmitoyl cysteine attachment. Residue Cys25 is the site of S-diacylglycerol cysteine attachment. The disordered stretch occupies residues 111 to 131; the sequence is SGLKGRAQKNGSTDSSDGSSK. The span at 119-131 shows a compositional bias: polar residues; it reads KNGSTDSSDGSSK.

The protein localises to the cell membrane. This is an uncharacterized protein from Mycoplasma genitalium (strain ATCC 33530 / DSM 19775 / NCTC 10195 / G37) (Mycoplasmoides genitalium).